We begin with the raw amino-acid sequence, 318 residues long: Transaldolase (318 aa).

The active-site Schiff-base intermediate with substrate is the lysine 132.

Belongs to the transaldolase family. Type 1 subfamily. Homodimer.

It localises to the cytoplasm. The enzyme catalyses D-sedoheptulose 7-phosphate + D-glyceraldehyde 3-phosphate = D-erythrose 4-phosphate + beta-D-fructose 6-phosphate. It functions in the pathway carbohydrate degradation; pentose phosphate pathway; D-glyceraldehyde 3-phosphate and beta-D-fructose 6-phosphate from D-ribose 5-phosphate and D-xylulose 5-phosphate (non-oxidative stage): step 2/3. In terms of biological role, transaldolase is important for the balance of metabolites in the pentose-phosphate pathway. The protein is Transaldolase of Shewanella sp. (strain MR-7).